A 203-amino-acid polypeptide reads, in one-letter code: uncharacterized protein (203 aa).

Residues 89–109 (CEIPFAACSVLSWSLPTIAAL) form a helical membrane-spanning segment.

It is found in the membrane. This is an uncharacterized protein from Saccharomyces cerevisiae (strain ATCC 204508 / S288c) (Baker's yeast).